Reading from the N-terminus, the 380-residue chain is Lipid-A-disaccharide synthase (380 aa).

This sequence belongs to the LpxB family.

The catalysed reaction is a lipid X + a UDP-2-N,3-O-bis[(3R)-3-hydroxyacyl]-alpha-D-glucosamine = a lipid A disaccharide + UDP + H(+). It functions in the pathway bacterial outer membrane biogenesis; LPS lipid A biosynthesis. Condensation of UDP-2,3-diacylglucosamine and 2,3-diacylglucosamine-1-phosphate to form lipid A disaccharide, a precursor of lipid A, a phosphorylated glycolipid that anchors the lipopolysaccharide to the outer membrane of the cell. The protein is Lipid-A-disaccharide synthase of Francisella tularensis subsp. tularensis (strain FSC 198).